Reading from the N-terminus, the 89-residue chain is Small ribosomal subunit protein uS15 (89 aa).

Belongs to the universal ribosomal protein uS15 family. In terms of assembly, part of the 30S ribosomal subunit. Forms a bridge to the 50S subunit in the 70S ribosome, contacting the 23S rRNA.

One of the primary rRNA binding proteins, it binds directly to 16S rRNA where it helps nucleate assembly of the platform of the 30S subunit by binding and bridging several RNA helices of the 16S rRNA. In terms of biological role, forms an intersubunit bridge (bridge B4) with the 23S rRNA of the 50S subunit in the ribosome. This Lactococcus lactis subsp. lactis (strain IL1403) (Streptococcus lactis) protein is Small ribosomal subunit protein uS15.